The following is an 811-amino-acid chain: G-type lectin S-receptor-like serine/threonine-protein kinase LECRK3 (811 aa).

An N-terminal signal peptide occupies residues 1–23 (MAHLLFLPILQLLLLYCTKSAQA). Residues 24 to 153 (QLNISIGSSL…DGATKWESFG (130 aa)) enclose the Bulb-type lectin domain. At 24-464 (QLNISIGSSL…DKKYWILGSS (441 aa)) the chain is on the extracellular side. N-linked (GlcNAc...) asparagine glycans are attached at residues asparagine 26, asparagine 39, asparagine 59, asparagine 219, asparagine 226, asparagine 237, and asparagine 242. The EGF-like; atypical domain occupies 292-344 (PENICQSIQTMVGSGACGFNSYCTIDGTKNTTSCLCPQNYKFIDDKRKYKGCR). Intrachain disulfides connect cysteine 296–cysteine 314, cysteine 308–cysteine 325, cysteine 327–cysteine 343, cysteine 389–cysteine 411, and cysteine 393–cysteine 399. Asparagine 321 carries N-linked (GlcNAc...) asparagine glycosylation. The PAN domain maps to 352 to 430 (CDLDETTAML…GKMDVNVPRT (79 aa)). The chain crosses the membrane as a helical span at residues 465–485 (LLFGSSVLVNFLLISVMLFGT). Residues 486-811 (YCSITSRKKI…DPSSYISSLA (326 aa)) are Cytoplasmic-facing. Residues 521 to 795 (GGFQEVLGTG…KVTQMLDGAV (275 aa)) enclose the Protein kinase domain. ATP contacts are provided by residues 527–535 (LGTGASGVV) and lysine 551. The Proton acceptor role is filled by aspartate 645.

This sequence belongs to the protein kinase superfamily. Ser/Thr protein kinase family.

It is found in the membrane. It carries out the reaction L-seryl-[protein] + ATP = O-phospho-L-seryl-[protein] + ADP + H(+). It catalyses the reaction L-threonyl-[protein] + ATP = O-phospho-L-threonyl-[protein] + ADP + H(+). Functionally, involved in resistance against the herbivorous insect brown planthopper (N.lugens, BPH). Member of the BPH3 (BPH resistance locus 3) cluster which contains LECRK1, LECRK2 and LECRK3. This Oryza sativa subsp. indica (Rice) protein is G-type lectin S-receptor-like serine/threonine-protein kinase LECRK3.